The following is a 231-amino-acid chain: NifU-like protein 1, chloroplastic (231 aa).

A chloroplast-targeting transit peptide spans 1-69 (MMASLATSIS…SSQGEKISPL (69 aa)).

This sequence belongs to the NifU family. In terms of assembly, homodimer; disulfide-linked. In terms of tissue distribution, predominantly expressed in floral stalks and siliques. Expressed in leaves, cauline leaves, flower stalks and flowers (at protein level).

The protein resides in the plastid. It is found in the chloroplast stroma. Molecular scaffold for [Fe-S] cluster assembly of chloroplastic iron-sulfur proteins. In Arabidopsis thaliana (Mouse-ear cress), this protein is NifU-like protein 1, chloroplastic (NIFU1).